We begin with the raw amino-acid sequence, 198 residues long: UPF0098 protein PH1269 (198 aa).

It belongs to the UPF0098 family.

The protein is UPF0098 protein PH1269 of Pyrococcus horikoshii (strain ATCC 700860 / DSM 12428 / JCM 9974 / NBRC 100139 / OT-3).